We begin with the raw amino-acid sequence, 157 residues long: Phosphopantetheine adenylyltransferase (157 aa).

Ser-8 provides a ligand contact to substrate. Residues 8–9 and His-16 contribute to the ATP site; that span reads SF. Positions 40, 72, and 86 each coordinate substrate. ATP contacts are provided by residues 87–89, Glu-97, and 122–128; these read GLR and FSFLSSS.

This sequence belongs to the bacterial CoaD family. As to quaternary structure, homohexamer. Requires Mg(2+) as cofactor.

The protein localises to the cytoplasm. The enzyme catalyses (R)-4'-phosphopantetheine + ATP + H(+) = 3'-dephospho-CoA + diphosphate. Its pathway is cofactor biosynthesis; coenzyme A biosynthesis; CoA from (R)-pantothenate: step 4/5. Functionally, reversibly transfers an adenylyl group from ATP to 4'-phosphopantetheine, yielding dephospho-CoA (dPCoA) and pyrophosphate. This chain is Phosphopantetheine adenylyltransferase, found in Prochlorococcus marinus (strain MIT 9211).